A 774-amino-acid chain; its full sequence is Ion-translocating oxidoreductase complex subunit C (774 aa).

2 4Fe-4S ferredoxin-type domains span residues 359 to 389 (ELPE…QQLH) and 399 to 428 (QLLA…VQYY). [4Fe-4S] cluster is bound by residues cysteine 369, cysteine 372, cysteine 375, cysteine 379, cysteine 408, cysteine 411, cysteine 414, and cysteine 418. Positions 453-490 (EQRQARLRRDEERRAAERAQRAEKAALARAAQAEREEA) are enriched in basic and acidic residues. The segment at 453–493 (EQRQARLRRDEERRAAERAQRAEKAALARAAQAEREEAAPA) is disordered.

It belongs to the 4Fe4S bacterial-type ferredoxin family. RnfC subfamily. In terms of assembly, the complex is composed of six subunits: RnfA, RnfB, RnfC, RnfD, RnfE and RnfG. It depends on [4Fe-4S] cluster as a cofactor.

It localises to the cell inner membrane. Its function is as follows. Part of a membrane-bound complex that couples electron transfer with translocation of ions across the membrane. The protein is Ion-translocating oxidoreductase complex subunit C of Pseudomonas aeruginosa (strain ATCC 15692 / DSM 22644 / CIP 104116 / JCM 14847 / LMG 12228 / 1C / PRS 101 / PAO1).